Reading from the N-terminus, the 197-residue chain is Peptidyl-tRNA hydrolase (197 aa).

Tyr18 serves as a coordination point for tRNA. The Proton acceptor role is filled by His23. TRNA contacts are provided by Phe69, Asn71, and Asn117.

The protein belongs to the PTH family. Monomer.

It localises to the cytoplasm. It catalyses the reaction an N-acyl-L-alpha-aminoacyl-tRNA + H2O = an N-acyl-L-amino acid + a tRNA + H(+). In terms of biological role, hydrolyzes ribosome-free peptidyl-tRNAs (with 1 or more amino acids incorporated), which drop off the ribosome during protein synthesis, or as a result of ribosome stalling. Catalyzes the release of premature peptidyl moieties from peptidyl-tRNA molecules trapped in stalled 50S ribosomal subunits, and thus maintains levels of free tRNAs and 50S ribosomes. This Tolumonas auensis (strain DSM 9187 / NBRC 110442 / TA 4) protein is Peptidyl-tRNA hydrolase.